The sequence spans 78 residues: Sec-independent protein translocase protein TatA (78 aa).

A helical membrane pass occupies residues 1–21; sequence MGSLSIWHWIVVIAVVLLLFG. Over residues 43–60 the composition is skewed to basic and acidic residues; it reads LQDDEKTAEKSEPVKSID. Residues 43-78 form a disordered region; the sequence is LQDDEKTAEKSEPVKSIDHTSTPGATNRTDVGSKAV. A compositionally biased stretch (polar residues) spans 61-72; the sequence is HTSTPGATNRTD.

This sequence belongs to the TatA/E family. As to quaternary structure, the Tat system comprises two distinct complexes: a TatABC complex, containing multiple copies of TatA, TatB and TatC subunits, and a separate TatA complex, containing only TatA subunits. Substrates initially bind to the TatABC complex, which probably triggers association of the separate TatA complex to form the active translocon.

It is found in the cell inner membrane. Functionally, part of the twin-arginine translocation (Tat) system that transports large folded proteins containing a characteristic twin-arginine motif in their signal peptide across membranes. TatA could form the protein-conducting channel of the Tat system. The protein is Sec-independent protein translocase protein TatA of Rhodopseudomonas palustris (strain ATCC BAA-98 / CGA009).